The chain runs to 247 residues: Probable transcriptional regulatory protein GSU1074 (247 aa).

This sequence belongs to the TACO1 family.

Its subcellular location is the cytoplasm. This Geobacter sulfurreducens (strain ATCC 51573 / DSM 12127 / PCA) protein is Probable transcriptional regulatory protein GSU1074.